The chain runs to 484 residues: Zinc metalloproteinase/disintegrin PMMP-2 (484 aa).

The signal sequence occupies residues 1–20; the sequence is MIQVLLVTICLAVFPYQGSS. A propeptide spanning residues 21-190 is cleaved from the precursor; the sequence is IILESGNVDD…KASQLNLTPL (170 aa). A Peptidase M12B domain is found at 197–395; it reads RYVKLAIVVD…YNPQCILNAP (199 aa). Asn239 is a glycosylation site (N-linked (GlcNAc...) asparagine). 3 cysteine pairs are disulfide-bonded: Cys308/Cys390, Cys352/Cys374, and Cys354/Cys357. His333 provides a ligand contact to Zn(2+). The active site involves Glu334. Residues His337 and His343 each coordinate Zn(2+). Positions 396–413 are excised as a propeptide; it reads LRTDTVSTPVSGNEFLEA. The 82-residue stretch at 403 to 484 folds into the Disintegrin domain; that stretch reads TPVSGNEFLE…ADCPRNGLYG (82 aa). 6 disulfide bridges follow: Cys417-Cys432, Cys419-Cys427, Cys426-Cys449, Cys440-Cys446, Cys445-Cys470, and Cys458-Cys477. A Cell attachment site motif is present at residues 462–464; that stretch reads RGD.

The protein belongs to the venom metalloproteinase (M12B) family. P-II subfamily. P-IIa sub-subfamily. Monomer. It depends on Zn(2+) as a cofactor. In terms of tissue distribution, expressed by the venom gland.

The protein localises to the secreted. Functionally, impairs hemostasis in the envenomed animal. Inhibits platelet aggregation induced by ADP, thrombin, platelet-activating factor and collagen. Acts by inhibiting fibrinogen interaction with platelet receptors GPIIb/GPIIIa (ITGA2B/ITGB3). This is Zinc metalloproteinase/disintegrin PMMP-2 from Protobothrops mucrosquamatus (Taiwan habu).